Consider the following 303-residue polypeptide: Coenzyme PQQ synthesis protein B (303 aa).

Belongs to the PqqB family.

Its pathway is cofactor biosynthesis; pyrroloquinoline quinone biosynthesis. May be involved in the transport of PQQ or its precursor to the periplasm. This Acinetobacter baumannii (strain AYE) protein is Coenzyme PQQ synthesis protein B.